Consider the following 298-residue polypeptide: NADH-cytochrome b5 reductase 1 (298 aa).

Residues 14–34 (VILAGAYLIDPSALPFVAAGV) form a helical membrane-spanning segment. The region spanning 56-159 (KEYRKFKLVD…RGPKGQFSYT (104 aa)) is the FAD-binding FR-type domain. FAD-binding positions include 139 to 154 (SELS…GPKG) and 165 to 197 (AIGM…QVNF).

Belongs to the flavoprotein pyridine nucleotide cytochrome reductase family. Monomer. Component of the 2-(3-amino-3-carboxypropyl)histidine synthase complex composed of DPH1, DPH2, DPH3 and a NADH-dependent reductase, predominantly CBR1. FAD serves as cofactor.

Its subcellular location is the mitochondrion outer membrane. It carries out the reaction 2 Fe(III)-[cytochrome b5] + NADH = 2 Fe(II)-[cytochrome b5] + NAD(+) + H(+). The enzyme catalyses 2 Fe(3+)-[Dph3] + NADH = 2 Fe(2+)-[Dph3] + NAD(+) + H(+). It participates in protein modification; peptidyl-diphthamide biosynthesis. In terms of biological role, NADH-dependent reductase for DPH3 and cytochrome b5. Required for the first step of diphthamide biosynthesis, a post-translational modification of histidine which occurs in elongation factor 2. DPH1 and DPH2 transfer a 3-amino-3-carboxypropyl (ACP) group from S-adenosyl-L-methionine (SAM) to a histidine residue, the reaction is assisted by a reduction system comprising DPH3 and a NADH-dependent reductase, predominantly CBR1. By reducing DPH3, also involved in the formation of the tRNA wobble base modification mcm5s 2U (5-methoxycarbonylmethyl-2-thiouridine), mediated by the elongator complex. The cytochrome b5/NADH cytochrome b5 reductase electron transfer system supports the catalytic activity of several sterol biosynthetic enzymes. The chain is NADH-cytochrome b5 reductase 1 (CBR1) from Mortierella alpina (Oleaginous fungus).